A 364-amino-acid polypeptide reads, in one-letter code: DNA replication and repair protein RecF (364 aa).

Position 30 to 37 (30 to 37) interacts with ATP; it reads GNNAQGKT.

This sequence belongs to the RecF family.

The protein resides in the cytoplasm. In terms of biological role, the RecF protein is involved in DNA metabolism; it is required for DNA replication and normal SOS inducibility. RecF binds preferentially to single-stranded, linear DNA. It also seems to bind ATP. The sequence is that of DNA replication and repair protein RecF from Clostridium botulinum (strain Loch Maree / Type A3).